Consider the following 102-residue polypeptide: Protein V2 (102 aa).

Functionally, may be involved in the regulation of ssDNA versus dsDNA levels. The sequence is that of Protein V2 from Beet curly top virus (strain California/Logan) (BCTV).